The chain runs to 100 residues: Aspartyl/glutamyl-tRNA(Asn/Gln) amidotransferase subunit C (100 aa).

The protein belongs to the GatC family. In terms of assembly, heterotrimer of A, B and C subunits.

The enzyme catalyses L-glutamyl-tRNA(Gln) + L-glutamine + ATP + H2O = L-glutaminyl-tRNA(Gln) + L-glutamate + ADP + phosphate + H(+). It catalyses the reaction L-aspartyl-tRNA(Asn) + L-glutamine + ATP + H2O = L-asparaginyl-tRNA(Asn) + L-glutamate + ADP + phosphate + 2 H(+). Its function is as follows. Allows the formation of correctly charged Asn-tRNA(Asn) or Gln-tRNA(Gln) through the transamidation of misacylated Asp-tRNA(Asn) or Glu-tRNA(Gln) in organisms which lack either or both of asparaginyl-tRNA or glutaminyl-tRNA synthetases. The reaction takes place in the presence of glutamine and ATP through an activated phospho-Asp-tRNA(Asn) or phospho-Glu-tRNA(Gln). The protein is Aspartyl/glutamyl-tRNA(Asn/Gln) amidotransferase subunit C of Streptococcus equi subsp. equi (strain 4047).